Consider the following 216-residue polypeptide: UPF0502 protein Ent638_1581 (216 aa).

It belongs to the UPF0502 family.

The polypeptide is UPF0502 protein Ent638_1581 (Enterobacter sp. (strain 638)).